A 321-amino-acid polypeptide reads, in one-letter code: Gap junction delta-2 protein (321 aa).

Topologically, residues Met-1–Ser-19 are cytoplasmic. The helical transmembrane segment at Thr-20–Gly-42 threads the bilayer. The Extracellular portion of the chain corresponds to Glu-43–His-75. Residues Ile-76–Val-98 traverse the membrane as a helical segment. At His-99–Arg-197 the chain is on the cytoplasmic side. The segment at Arg-118–Glu-141 is disordered. Residues Gly-125–Gly-137 show a composition bias toward gly residues. A helical transmembrane segment spans residues Phe-198–Leu-220. Topologically, residues Tyr-221–Val-252 are extracellular. Residues Phe-253–Leu-275 traverse the membrane as a helical segment. Over Gly-276 to Val-321 the chain is Cytoplasmic.

It belongs to the connexin family. Delta-type subfamily. In terms of assembly, a connexon is composed of a hexamer of connexins. As to expression, highly expressed in neurons.

It localises to the cell membrane. The protein localises to the cell junction. The protein resides in the gap junction. One gap junction consists of a cluster of closely packed pairs of transmembrane channels, the connexons, through which materials of low MW diffuse from one cell to a neighboring cell. This Homo sapiens (Human) protein is Gap junction delta-2 protein (GJD2).